Consider the following 300-residue polypeptide: PAK4-inhibitor INKA2 (300 aa).

3 disordered regions span residues 59 to 104, 178 to 201, and 230 to 288; these read GGTP…SSPK, LEKG…GQSR, and KEKP…LEPS. A compositionally biased stretch (polar residues) spans 60-73; it reads GTPTFSCPESSQEQ. Over residues 93–102 the composition is skewed to low complexity; sequence SSSQPSFDSS. Residues 140 to 183 are inka box; it reads EPDDWTSTLMSRGRNRQPLVLGDNVFADLVGNWLDLPELEKGGE. Basic residues predominate over residues 246 to 256; it reads GRSKKVKKRSL.

This sequence belongs to the INKA family. Interacts with PAK4. Enriched in the nervous system.

The protein localises to the nucleus. Inhibitor of the serine/threonine-protein kinase PAK4. Acts by binding PAK4 in a substrate-like manner, inhibiting the protein kinase activity. In Mus musculus (Mouse), this protein is PAK4-inhibitor INKA2.